Here is a 99-residue protein sequence, read N- to C-terminus: MALTPADVSRIANLARLELSTAEQSDLLVQLNGFFGIVERMRAVDTTGVAPLYTPLSAVQDVSLRLRDDAVTETDQREANQKSAPAVEGGLFLVPRVIE.

The protein belongs to the GatC family. In terms of assembly, heterotrimer of A, B and C subunits.

The catalysed reaction is L-glutamyl-tRNA(Gln) + L-glutamine + ATP + H2O = L-glutaminyl-tRNA(Gln) + L-glutamate + ADP + phosphate + H(+). It catalyses the reaction L-aspartyl-tRNA(Asn) + L-glutamine + ATP + H2O = L-asparaginyl-tRNA(Asn) + L-glutamate + ADP + phosphate + 2 H(+). Functionally, allows the formation of correctly charged Asn-tRNA(Asn) or Gln-tRNA(Gln) through the transamidation of misacylated Asp-tRNA(Asn) or Glu-tRNA(Gln) in organisms which lack either or both of asparaginyl-tRNA or glutaminyl-tRNA synthetases. The reaction takes place in the presence of glutamine and ATP through an activated phospho-Asp-tRNA(Asn) or phospho-Glu-tRNA(Gln). This chain is Aspartyl/glutamyl-tRNA(Asn/Gln) amidotransferase subunit C, found in Leptothrix cholodnii (strain ATCC 51168 / LMG 8142 / SP-6) (Leptothrix discophora (strain SP-6)).